The following is a 253-amino-acid chain: DNA repair protein RecO (253 aa).

It belongs to the RecO family.

Involved in DNA repair and RecF pathway recombination. This chain is DNA repair protein RecO, found in Staphylococcus epidermidis (strain ATCC 35984 / DSM 28319 / BCRC 17069 / CCUG 31568 / BM 3577 / RP62A).